The chain runs to 69 residues: Large ribosomal subunit protein uL29 (69 aa).

Belongs to the universal ribosomal protein uL29 family.

The sequence is that of Large ribosomal subunit protein uL29 from Methylobacillus flagellatus (strain ATCC 51484 / DSM 6875 / VKM B-1610 / KT).